The chain runs to 127 residues: Small ribosomal subunit protein uS11 (127 aa).

The protein belongs to the universal ribosomal protein uS11 family. Part of the 30S ribosomal subunit. Interacts with proteins S7 and S18. Binds to IF-3.

Functionally, located on the platform of the 30S subunit, it bridges several disparate RNA helices of the 16S rRNA. Forms part of the Shine-Dalgarno cleft in the 70S ribosome. The chain is Small ribosomal subunit protein uS11 from Rickettsia rickettsii (strain Iowa).